The sequence spans 760 residues: Histone-lysine N-methyltransferase EZH2 (760 aa).

Disordered stretches follow at residues K208 to F231 and P356 to V444. Residues T361 to R373 show a composition bias toward basic residues. Residues P375–S388 show a composition bias toward polar residues. Residues E389–G400 show a composition bias toward basic and acidic residues. Positions C517 to S619 constitute a CXC domain. The 116-residue stretch at K626 to R741 folds into the SET domain.

The protein belongs to the class V-like SAM-binding methyltransferase superfamily. Histone-lysine methyltransferase family. EZ subfamily. As to quaternary structure, component of the prc2/eed-ezh2 complex.

The protein resides in the nucleus. The enzyme catalyses L-lysyl(27)-[histone H3] + 3 S-adenosyl-L-methionine = N(6),N(6),N(6)-trimethyl-L-lysyl(27)-[histone H3] + 3 S-adenosyl-L-homocysteine + 3 H(+). In terms of biological role, polycomb group (PcG) protein. Catalytic subunit of the prc2/eed-ezh2 complex, which methylates 'Lys-9' and 'Lys-27' of histone H3, leading to transcriptional repression of the affected target gene. May regulate the circadian clock via histone methylation at the promoter of the circadian genes. The chain is Histone-lysine N-methyltransferase EZH2 (ezh2) from Danio rerio (Zebrafish).